We begin with the raw amino-acid sequence, 396 residues long: Acetate kinase (396 aa).

Residue Asn7 coordinates Mg(2+). Lys14 contributes to the ATP binding site. A substrate-binding site is contributed by Arg89. The Proton donor/acceptor role is filled by Asp146. Residues 206-210 (HLGNG), 280-282 (DLR), and 328-332 (GIGEN) each bind ATP. Mg(2+) is bound at residue Glu382.

This sequence belongs to the acetokinase family. As to quaternary structure, homodimer. Requires Mg(2+) as cofactor. Mn(2+) is required as a cofactor.

It localises to the cytoplasm. It catalyses the reaction acetate + ATP = acetyl phosphate + ADP. It functions in the pathway metabolic intermediate biosynthesis; acetyl-CoA biosynthesis; acetyl-CoA from acetate: step 1/2. Functionally, catalyzes the formation of acetyl phosphate from acetate and ATP. Can also catalyze the reverse reaction. The chain is Acetate kinase from Maridesulfovibrio salexigens (strain ATCC 14822 / DSM 2638 / NCIMB 8403 / VKM B-1763) (Desulfovibrio salexigens).